The primary structure comprises 216 residues: Ribonuclease HII (216 aa).

In terms of domain architecture, RNase H type-2 spans 33-216; it reads WPVAGADEAG…RMSFRPFRQV (184 aa). The a divalent metal cation site is built by D39, E40, and D130.

The protein belongs to the RNase HII family. The cofactor is Mn(2+). Requires Mg(2+) as cofactor.

The protein localises to the cytoplasm. It carries out the reaction Endonucleolytic cleavage to 5'-phosphomonoester.. Endonuclease that specifically degrades the RNA of RNA-DNA hybrids. The polypeptide is Ribonuclease HII (Rhizobium meliloti (strain 1021) (Ensifer meliloti)).